The chain runs to 361 residues: Ribosomal RNA large subunit methyltransferase M (361 aa).

S-adenosyl-L-methionine-binding positions include serine 187, 220 to 223, aspartate 239, aspartate 259, and aspartate 276; that span reads CPGG. Lysine 305 acts as the Proton acceptor in catalysis.

Belongs to the class I-like SAM-binding methyltransferase superfamily. RNA methyltransferase RlmE family. RlmM subfamily. As to quaternary structure, monomer.

It is found in the cytoplasm. The enzyme catalyses cytidine(2498) in 23S rRNA + S-adenosyl-L-methionine = 2'-O-methylcytidine(2498) in 23S rRNA + S-adenosyl-L-homocysteine + H(+). In terms of biological role, catalyzes the 2'-O-methylation at nucleotide C2498 in 23S rRNA. This chain is Ribosomal RNA large subunit methyltransferase M, found in Shewanella sp. (strain MR-7).